Here is a 142-residue protein sequence, read N- to C-terminus: Hemoglobin subunit alpha-3 (142 aa).

The Globin domain occupies 2–142 (TLTDSDKAAV…VATVLTSKYR (141 aa)). His59 contacts O2. His88 serves as a coordination point for heme b.

This sequence belongs to the globin family. In terms of assembly, heterotetramer of two alpha chains and two beta chains. As to expression, red blood cells.

Its function is as follows. This is a larval (tadpole) alpha-globin. This is Hemoglobin subunit alpha-3 (hba3) from Xenopus laevis (African clawed frog).